The chain runs to 56 residues: MEERRCSFCNTRITPGTGKLYAKKDGTVYYFCSSKCEKNMRLGRVSRKIKWARKGA.

Zn(2+) is bound by residues C6, C9, C32, and C36. The C4-type zinc finger occupies 6–36 (CSFCNTRITPGTGKLYAKKDGTVYYFCSSKC).

The protein belongs to the eukaryotic ribosomal protein eL24 family. As to quaternary structure, part of the 50S ribosomal subunit. Forms a cluster with proteins L3 and L14. Zn(2+) is required as a cofactor.

Its function is as follows. Binds to the 23S rRNA. This is Large ribosomal subunit protein eL24 from Methanothrix thermoacetophila (strain DSM 6194 / JCM 14653 / NBRC 101360 / PT) (Methanosaeta thermophila).